Reading from the N-terminus, the 247-residue chain is Pleckstrin homology domain-containing family F member 2 (247 aa).

Residues 35-131 form the PH domain; that stretch reads VLIGEGVLTK…WMSHINKCVS (97 aa). An FYVE-type zinc finger spans residues 152-212; sequence DSEATVCMRC…VCEFCYKQLS (61 aa). Residues Cys-158, Cys-161, Cys-175, Cys-178, Cys-183, Cys-186, Cys-204, and Cys-207 each coordinate Zn(2+). The tract at residues 213–247 is disordered; sequence TGATLPPRSDSYSRQGSDFGSNNISDDDDDDDSSD. The segment covering 222 to 236 has biased composition (polar residues); that stretch reads DSYSRQGSDFGSNNI. Over residues 237-247 the composition is skewed to acidic residues; the sequence is SDDDDDDDSSD.

It is found in the early endosome membrane. The protein resides in the endoplasmic reticulum. In terms of biological role, may play a role in early endosome fusion upstream of RAB5, hence regulating receptor trafficking and fluid-phase transport. Enhances cellular sensitivity to TNF-induced apoptosis. This Danio rerio (Zebrafish) protein is Pleckstrin homology domain-containing family F member 2 (plekhf2).